The following is a 710-amino-acid chain: mRNA export factor crp79 (710 aa).

RRM domains are found at residues 19–102 (IYVG…KLTI) and 222–292 (HFKQ…PTTP). Polar residues predominate over residues 333–348 (QWGSVSTTGVSNQQNH). The segment at 333-357 (QWGSVSTTGVSNQQNHPAAWNPDNK) is disordered. Positions 401 to 474 (EDLFSPFGSI…DRIRRLQAFF (74 aa)) constitute an RRM 3 domain. The span at 502–524 (TIRKPIESSTNKISENPTTLSSK) shows a compositional bias: polar residues. The tract at residues 502 to 544 (TIRKPIESSTNKISENPTTLSSKVENKNEPKTGENKEPSQTNE) is disordered. The segment covering 525–538 (VENKNEPKTGENKE) has biased composition (basic and acidic residues).

Its subcellular location is the cytoplasm. The protein resides in the nucleus. In terms of biological role, binds the poly(A) tail of mRNA. Involved in the export of mRNA from the nucleus to the cytoplasm. The sequence is that of mRNA export factor crp79 (crp79) from Schizosaccharomyces pombe (strain 972 / ATCC 24843) (Fission yeast).